Reading from the N-terminus, the 951-residue chain is 5'-3' exoribonuclease 2 (951 aa).

The CCHC-type zinc finger occupies 262 to 278 (PCALCNQFGHEVKDCEG). Residue Lys-286 is modified to N6-acetyllysine. Residues 408-508 (KDDEDSFRRR…SDSEPEPEDN (101 aa)) form a disordered region. The segment covering 416–426 (RRQKEKRKRMK) has biased composition (basic residues). Thr-439 is modified (phosphothreonine). Polar residues-rich tracts occupy residues 445–458 (SRNS…SNPR) and 467–485 (QRNS…SDGS). Phosphoserine occurs at positions 448, 471, 473, 475, 482, 487, 499, 501, and 678. Arg-824, Arg-847, and Arg-851 each carry asymmetric dimethylarginine; alternate. Omega-N-methylarginine; alternate occurs at positions 824, 847, and 851. An Asymmetric dimethylarginine modification is found at Arg-880. Arg-883 carries the post-translational modification Asymmetric dimethylarginine; alternate. At Arg-883 the chain carries Omega-N-methylarginine; alternate. Arg-895 bears the Omega-N-methylarginine mark. The segment at 907–951 (NQYQMLGGPGGYPPRRDDHRGGRQGYPREGRKYPLPPPSGRYSWN) is disordered. Basic and acidic residues predominate over residues 920-938 (PRRDDHRGGRQGYPREGRK). Arg-947 carries the asymmetric dimethylarginine; alternate modification. Omega-N-methylarginine; alternate is present on Arg-947.

The protein belongs to the 5'-3' exonuclease family. XRN2/RAT1 subfamily. As to quaternary structure, interacts with POLR2A and SMN1/SMN2. Interacts with CDKN2AIP and NKRF. Interacts with CDKN2AIPNL; the interaction is direct. Interacts with TRIM71 (via NHL repeats) in an RNA-dependent manner. Interacts with DHX34; the interaction is RNA-independent. As to expression, expressed in the spleen, testis, heart, brain, lung, liver, skeletal muscle, and kidney.

The protein resides in the nucleus. It localises to the nucleolus. In terms of biological role, possesses 5'-&gt;3' exoribonuclease activity. May promote the termination of transcription by RNA polymerase II. During transcription termination, cleavage at the polyadenylation site liberates a 5' fragment which is subsequently processed to form the mature mRNA and a 3' fragment which remains attached to the elongating polymerase. The processive degradation of this 3' fragment by this protein may promote termination of transcription. Binds to RNA polymerase II (RNAp II) transcription termination R-loops formed by G-rich pause sites. The protein is 5'-3' exoribonuclease 2 (Xrn2) of Mus musculus (Mouse).